Consider the following 139-residue polypeptide: Peptide methionine sulfoxide reductase MsrB (139 aa).

One can recognise a MsrB domain in the interval 8 to 130; it reads DREWQRELSP…NSASLQLKTQ (123 aa). Zn(2+)-binding residues include cysteine 47, cysteine 50, cysteine 96, and cysteine 99. Cysteine 119 serves as the catalytic Nucleophile.

It belongs to the MsrB Met sulfoxide reductase family. The cofactor is Zn(2+).

It carries out the reaction L-methionyl-[protein] + [thioredoxin]-disulfide + H2O = L-methionyl-(R)-S-oxide-[protein] + [thioredoxin]-dithiol. This is Peptide methionine sulfoxide reductase MsrB from Acinetobacter baumannii (strain AB307-0294).